A 207-amino-acid polypeptide reads, in one-letter code: Holliday junction branch migration complex subunit RuvA (207 aa).

The tract at residues 1-71 is domain I; that stretch reads MIVSIAGKLV…RLTPRLIGFS (71 aa). Residues 72-149 form a domain II region; the sequence is TLPERQFFDL…RFALMVAGGE (78 aa). The interval 150–155 is flexible linker; it reads VADAME. The domain III stretch occupies residues 156–207; sequence VESPIVSDTYDALVTLGHSESDARKLIDETLATGKKFKDTESLLTAIYQRSK.

This sequence belongs to the RuvA family. In terms of assembly, homotetramer. Forms an RuvA(8)-RuvB(12)-Holliday junction (HJ) complex. HJ DNA is sandwiched between 2 RuvA tetramers; dsDNA enters through RuvA and exits via RuvB. An RuvB hexamer assembles on each DNA strand where it exits the tetramer. Each RuvB hexamer is contacted by two RuvA subunits (via domain III) on 2 adjacent RuvB subunits; this complex drives branch migration. In the full resolvosome a probable DNA-RuvA(4)-RuvB(12)-RuvC(2) complex forms which resolves the HJ.

It is found in the cytoplasm. The RuvA-RuvB-RuvC complex processes Holliday junction (HJ) DNA during genetic recombination and DNA repair, while the RuvA-RuvB complex plays an important role in the rescue of blocked DNA replication forks via replication fork reversal (RFR). RuvA specifically binds to HJ cruciform DNA, conferring on it an open structure. The RuvB hexamer acts as an ATP-dependent pump, pulling dsDNA into and through the RuvAB complex. HJ branch migration allows RuvC to scan DNA until it finds its consensus sequence, where it cleaves and resolves the cruciform DNA. In Rhodopirellula baltica (strain DSM 10527 / NCIMB 13988 / SH1), this protein is Holliday junction branch migration complex subunit RuvA.